A 324-amino-acid polypeptide reads, in one-letter code: Putative ribose-phosphate pyrophosphokinase 2 (324 aa).

ATP contacts are provided by residues 43 to 45 (DGE) and 102 to 103 (RQ). Residue H136 coordinates Mg(2+). D-ribose 5-phosphate is bound by residues D225 and 229 to 233 (NTGKT).

Belongs to the ribose-phosphate pyrophosphokinase family. Class I subfamily. In terms of assembly, homohexamer. It depends on Mg(2+) as a cofactor.

The protein resides in the cytoplasm. The enzyme catalyses D-ribose 5-phosphate + ATP = 5-phospho-alpha-D-ribose 1-diphosphate + AMP + H(+). It functions in the pathway metabolic intermediate biosynthesis; 5-phospho-alpha-D-ribose 1-diphosphate biosynthesis; 5-phospho-alpha-D-ribose 1-diphosphate from D-ribose 5-phosphate (route I): step 1/1. Functionally, involved in the biosynthesis of the central metabolite phospho-alpha-D-ribosyl-1-pyrophosphate (PRPP) via the transfer of pyrophosphoryl group from ATP to 1-hydroxyl of ribose-5-phosphate (Rib-5-P). The protein is Putative ribose-phosphate pyrophosphokinase 2 of Streptococcus agalactiae serotype III (strain NEM316).